A 203-amino-acid polypeptide reads, in one-letter code: Endoplasmic reticulum transmembrane protein 3 (203 aa).

Topologically, residues 1-6 (MSLYYT) are lumenal. The chain crosses the membrane as a helical span at residues 7 to 27 (LVFAILVVEIFMFSILALPIP). Residues 28-45 (SRYRRPLTLLLLKPFKSS) are Cytoplasmic-facing. A helical transmembrane segment spans residues 46–66 (TVQVAIKCVLGFILLLFIDCI). At 67 to 110 (NRVYSIDKELQLSSASQNNGAIIAQDRIEVLSRKFFAQRNMYLT) the chain is on the lumenal side. The chain crosses the membrane as a helical span at residues 111–131 (GITLFLTFVVVRTFGLVIELL). The Cytoplasmic segment spans residues 132-203 (TMKDIYRASP…KSESLQEEIN (72 aa)). Positions 142 to 171 (PVASSDVKKNDSVTAEAAAQSGASKDDHGD) are disordered.

The protein belongs to the BCAP29/BCAP31 family.

The protein resides in the endoplasmic reticulum membrane. May play a role in anterograde transport of membrane proteins from the endoplasmic reticulum to the Golgi. May be involved in invertase secretion. This is Endoplasmic reticulum transmembrane protein 3 (YET3) from Saccharomyces cerevisiae (strain ATCC 204508 / S288c) (Baker's yeast).